We begin with the raw amino-acid sequence, 248 residues long: 7-cyano-7-deazaguanine synthase (248 aa).

Position 22 to 32 (22 to 32) interacts with ATP; the sequence is LSGGLDSTTCL. Residues Cys216, Cys225, Cys228, and Cys231 each coordinate Zn(2+).

This sequence belongs to the QueC family. Requires Zn(2+) as cofactor.

The catalysed reaction is 7-carboxy-7-deazaguanine + NH4(+) + ATP = 7-cyano-7-deazaguanine + ADP + phosphate + H2O + H(+). Its pathway is purine metabolism; 7-cyano-7-deazaguanine biosynthesis. In terms of biological role, catalyzes the ATP-dependent conversion of 7-carboxy-7-deazaguanine (CDG) to 7-cyano-7-deazaguanine (preQ(0)). This is 7-cyano-7-deazaguanine synthase from Leptospira biflexa serovar Patoc (strain Patoc 1 / Ames).